The following is a 338-amino-acid chain: UDP-glucose 4-epimerase (338 aa).

NAD(+) is bound by residues 11 to 12 (YI), 31 to 36 (DNLCNS), 58 to 59 (DI), 80 to 84 (FAGLK), N99, S124, Y149, K153, and F178. Residues S124 and Y149 each coordinate substrate. The active-site Proton acceptor is the Y149. Residues N179, 199-200 (NL), 216-218 (SVF), R231, and 292-295 (RSGD) each bind substrate.

Belongs to the NAD(P)-dependent epimerase/dehydratase family. As to quaternary structure, homodimer. NAD(+) serves as cofactor.

It carries out the reaction UDP-alpha-D-glucose = UDP-alpha-D-galactose. It participates in carbohydrate metabolism; galactose metabolism. Its function is as follows. Involved in the metabolism of galactose. Catalyzes the conversion of UDP-galactose (UDP-Gal) to UDP-glucose (UDP-Glc) through a mechanism involving the transient reduction of NAD. By controlling the internal galactose concentration, it may be linked to the biosynthesis of lipopolysaccharide surface molecules, which are important for the pathogenesis of H.influenzae. The sequence is that of UDP-glucose 4-epimerase (galE) from Haemophilus influenzae (strain ATCC 51907 / DSM 11121 / KW20 / Rd).